A 226-amino-acid polypeptide reads, in one-letter code: Ribose-5-phosphate isomerase A (226 aa).

Residues 33 to 36 (TGST), 86 to 89 (DGAD), and 99 to 102 (KGGG) each bind substrate. Glu108 (proton acceptor) is an active-site residue. Lys126 serves as a coordination point for substrate.

This sequence belongs to the ribose 5-phosphate isomerase family. As to quaternary structure, homodimer.

It catalyses the reaction aldehydo-D-ribose 5-phosphate = D-ribulose 5-phosphate. Its pathway is carbohydrate degradation; pentose phosphate pathway; D-ribose 5-phosphate from D-ribulose 5-phosphate (non-oxidative stage): step 1/1. Functionally, catalyzes the reversible conversion of ribose-5-phosphate to ribulose 5-phosphate. The sequence is that of Ribose-5-phosphate isomerase A from Bordetella parapertussis (strain 12822 / ATCC BAA-587 / NCTC 13253).